The primary structure comprises 675 residues: DNA ligase (675 aa).

NAD(+) is bound by residues 36 to 40 (DAVYD), 85 to 86 (SL), and Glu118. Residue Lys120 is the N6-AMP-lysine intermediate of the active site. Residues Arg141, Glu178, Lys298, and Lys322 each contribute to the NAD(+) site. Residues Cys416, Cys419, Cys434, and Cys439 each coordinate Zn(2+). The 78-residue stretch at 598–675 (TQPQTLSGKT…SEADLLALLQ (78 aa)) folds into the BRCT domain.

Belongs to the NAD-dependent DNA ligase family. LigA subfamily. The cofactor is Mg(2+). Mn(2+) is required as a cofactor.

It catalyses the reaction NAD(+) + (deoxyribonucleotide)n-3'-hydroxyl + 5'-phospho-(deoxyribonucleotide)m = (deoxyribonucleotide)n+m + AMP + beta-nicotinamide D-nucleotide.. DNA ligase that catalyzes the formation of phosphodiester linkages between 5'-phosphoryl and 3'-hydroxyl groups in double-stranded DNA using NAD as a coenzyme and as the energy source for the reaction. It is essential for DNA replication and repair of damaged DNA. The sequence is that of DNA ligase from Acaryochloris marina (strain MBIC 11017).